A 147-amino-acid polypeptide reads, in one-letter code: MLDELDKKIIGILMKDSRISYREIAKELNVAVGTIYNRIKKLEESGVIQGFTLKLNYENIGYDLTAIMGIKAQGKKIREIERIIAKDKRVMCVYDVTGEYDIIVIAKFKNREDMNRFVKGVLSIDGVEKTNTHVVLEVVKEDFRLEP.

Residues 2–63 (LDELDKKIIG…KLNYENIGYD (62 aa)) form the HTH asnC-type domain. Residues 21–40 (YREIAKELNVAVGTIYNRIK) constitute a DNA-binding region (H-T-H motif).

This is an uncharacterized protein from Pyrococcus abyssi (strain GE5 / Orsay).